The following is a 140-amino-acid chain: Alpha-lactalbumin (140 aa).

Residues 1-19 form the signal peptide; that stretch reads MMSLLSLLLLGIALPATQA. In terms of domain architecture, C-type lysozyme spans 20 to 140; that stretch reads IDYRKCQASQ…CIEDLDQWRC (121 aa). Cystine bridges form between Cys25-Cys140, Cys47-Cys131, Cys80-Cys96, and Cys92-Cys110. The N-linked (GlcNAc...) asparagine glycan is linked to Asn63. Ca(2+)-binding residues include Lys98, Asp101, Asp103, Asp106, and Asp107.

This sequence belongs to the glycosyl hydrolase 22 family. As to quaternary structure, lactose synthase (LS) is a heterodimer of a catalytic component, beta1,4-galactosyltransferase (beta4Gal-T1) and a regulatory component, alpha-lactalbumin (LA). In terms of tissue distribution, mammary gland specific. Secreted in milk.

It localises to the secreted. Its function is as follows. Regulatory subunit of lactose synthase, changes the substrate specificity of galactosyltransferase in the mammary gland making glucose a good acceptor substrate for this enzyme. This enables LS to synthesize lactose, the major carbohydrate component of milk. In other tissues, galactosyltransferase transfers galactose onto the N-acetylglucosamine of the oligosaccharide chains in glycoproteins. This is Alpha-lactalbumin (LALBA) from Notamacropus eugenii (Tammar wallaby).